A 219-amino-acid polypeptide reads, in one-letter code: Large ribosomal subunit protein uL4 (219 aa).

Positions 43–101 are disordered; it reads AAARQGTHKTKRRGEVRGGGKKPYRQKGTGRARQGSTRAPQFAGGGVVHGPQPRDYSQR. The segment covering 61–72 has biased composition (basic residues); the sequence is GGKKPYRQKGTG.

The protein belongs to the universal ribosomal protein uL4 family. As to quaternary structure, part of the 50S ribosomal subunit.

One of the primary rRNA binding proteins, this protein initially binds near the 5'-end of the 23S rRNA. It is important during the early stages of 50S assembly. It makes multiple contacts with different domains of the 23S rRNA in the assembled 50S subunit and ribosome. In terms of biological role, forms part of the polypeptide exit tunnel. This Streptomyces coelicolor (strain ATCC BAA-471 / A3(2) / M145) protein is Large ribosomal subunit protein uL4.